Here is a 288-residue protein sequence, read N- to C-terminus: Nucleotide-binding protein APP7_0339 (288 aa).

8 to 15 (GRSGSGKS) is a binding site for ATP. GTP is bound at residue 56-59 (DIRN).

Belongs to the RapZ-like family.

Its function is as follows. Displays ATPase and GTPase activities. This Actinobacillus pleuropneumoniae serotype 7 (strain AP76) protein is Nucleotide-binding protein APP7_0339.